A 161-amino-acid polypeptide reads, in one-letter code: Nucleotide-binding protein H16_A3060 (161 aa).

Belongs to the YajQ family.

In terms of biological role, nucleotide-binding protein. This is Nucleotide-binding protein H16_A3060 from Cupriavidus necator (strain ATCC 17699 / DSM 428 / KCTC 22496 / NCIMB 10442 / H16 / Stanier 337) (Ralstonia eutropha).